The following is a 118-amino-acid chain: UPF0102 protein Swit_0572 (118 aa).

Belongs to the UPF0102 family.

This Rhizorhabdus wittichii (strain DSM 6014 / CCUG 31198 / JCM 15750 / NBRC 105917 / EY 4224 / RW1) (Sphingomonas wittichii) protein is UPF0102 protein Swit_0572.